The primary structure comprises 546 residues: (-)-5-epieremophilene synthase STPS3 (546 aa).

5 residues coordinate Mg(2+): Asp299, Asp303, Asp442, Thr446, and Glu450. Positions 299-303 match the DDXXD motif motif; the sequence is DDTYD.

This sequence belongs to the terpene synthase family. Tpsa subfamily. In terms of assembly, monomer. Mg(2+) serves as cofactor. Highly expressed in flowers and at lower levels in leaves.

The enzyme catalyses (2E,6E)-farnesyl diphosphate = (-)-5-epi-eremophilene + diphosphate. It participates in secondary metabolite biosynthesis; terpenoid biosynthesis. In terms of biological role, sesquiterpene synthase that catalyzes the conversion of farnesyl diphosphate to (-)-5-epi-eremophilene. This chain is (-)-5-epieremophilene synthase STPS3, found in Salvia miltiorrhiza (Chinese sage).